A 55-amino-acid chain; its full sequence is Large ribosomal subunit protein bL33 (55 aa).

This sequence belongs to the bacterial ribosomal protein bL33 family.

The protein is Large ribosomal subunit protein bL33 of Brucella abortus (strain S19).